Reading from the N-terminus, the 34-residue chain is Cuticle protein 9 (34 aa).

The protein is Cuticle protein 9 of Blaberus craniifer (Death's head cockroach).